The sequence spans 652 residues: MKKRIKELTDLLNRYRYDYYTKDAPSVSDSDYDKLYRELVTLEQSYPEYVLQDSPTQQVGGTILKGFEKYRHQYPLFSLQDAFSREELDAFDKRVKAEFPNATYLAELKIDGLSISLSYENGFLQVGATRGDGNIGENITENIKKIKDIPHQLSEPLTITVRGEAYMSRQSFKAINEARQENGETEFANPRNAAAGTLRQLDTAVVAKRQLATFLYQEASPTARNQQNEVLAELADLGFSVNPYYQLTSSMDEIWDFIKTIEAKRDQLAYDIDGVVIKVNSLAMQEELGFTVKAPRWAIAYKFPAEEKEAEILSVDWTVGRTGVVTPTANLTPVQLAGTTVSRATLHNVDYIAEKDIRIGDTVIVYKAGDIIPAVLNVVMSKRNQQEVMLIPKLCPSCGSELVHFEDEVALRCINPLCPSLIQRSLEHFASRDAMNITGLGPAIVEKLFLAGFVHDVADIYQLTKENFMQLDGIKEKSADKLLAAIEASKSNSAEKLLFGLGIRHIGSKVSRLILEVYGDISALLTAKEEEIARIDGLGSTIAQSLTQYFEQKTAAILVDELKTAGVNMHYSGQKVNSDAALFGLTVVLTGKLNQLNRNEAKDKLEALGAKVTGSVSKKTDLVIAGSDAGSKLEKAKSLGIRIEDEDWLRQL.

NAD(+) is bound by residues 29-33 (DSDYD), 78-79 (SL), and Glu107. The active-site N6-AMP-lysine intermediate is Lys109. The NAD(+) site is built by Arg130, Glu164, Lys278, and Lys302. 4 residues coordinate Zn(2+): Cys395, Cys398, Cys413, and Cys418. A BRCT domain is found at 577–652 (NSDAALFGLT…IEDEDWLRQL (76 aa)).

This sequence belongs to the NAD-dependent DNA ligase family. LigA subfamily. It depends on Mg(2+) as a cofactor. Mn(2+) serves as cofactor.

It carries out the reaction NAD(+) + (deoxyribonucleotide)n-3'-hydroxyl + 5'-phospho-(deoxyribonucleotide)m = (deoxyribonucleotide)n+m + AMP + beta-nicotinamide D-nucleotide.. DNA ligase that catalyzes the formation of phosphodiester linkages between 5'-phosphoryl and 3'-hydroxyl groups in double-stranded DNA using NAD as a coenzyme and as the energy source for the reaction. It is essential for DNA replication and repair of damaged DNA. The sequence is that of DNA ligase from Streptococcus pyogenes serotype M4 (strain MGAS10750).